The chain runs to 263 residues: DNA repair protein RecO (263 aa).

Positions 243 to 263 are disordered; it reads DRKETARETVPTSDGTASNAV. A compositionally biased stretch (polar residues) spans 252–263; sequence VPTSDGTASNAV.

It belongs to the RecO family.

Its function is as follows. Involved in DNA repair and RecF pathway recombination. This Neisseria meningitidis serogroup C / serotype 2a (strain ATCC 700532 / DSM 15464 / FAM18) protein is DNA repair protein RecO.